A 495-amino-acid chain; its full sequence is Transcription termination/antitermination protein NusA (495 aa).

Residues 135-200 form the S1 motif domain; the sequence is GEIITGVVKK…RGAQLFVTRS (66 aa). Residues 302–368 enclose the KH domain; sequence KHTMDIAVEA…FTKYLDIDED (67 aa). Repeat copies occupy residues 364–414 and 439–489. The segment at 364–489 is 2 X 51 AA approximate repeats; it reads DIDEDFATVL…ALIMAARNIC (126 aa).

Belongs to the NusA family. As to quaternary structure, monomer. Binds directly to the core enzyme of the DNA-dependent RNA polymerase and to nascent RNA.

It localises to the cytoplasm. Functionally, participates in both transcription termination and antitermination. In Shigella flexneri, this protein is Transcription termination/antitermination protein NusA.